A 419-amino-acid chain; its full sequence is Peptide chain release factor subunit 1 (419 aa).

The protein belongs to the eukaryotic release factor 1 family. Heterodimer of two subunits, one of which binds GTP.

Its subcellular location is the cytoplasm. Directs the termination of nascent peptide synthesis (translation) in response to the termination codons UAA, UAG and UGA. The sequence is that of Peptide chain release factor subunit 1 from Methanococcus maripaludis (strain C6 / ATCC BAA-1332).